The following is a 290-amino-acid chain: Glyceraldehyde-3-phosphate dehydrogenase (290 aa).

Positions 13 and 58 each coordinate NAD(+). Residues 129–131, Thr-160, 189–190, and Arg-212 each bind D-glyceraldehyde 3-phosphate; these read SCT and TG. Cys-130 acts as the Nucleophile in catalysis.

This sequence belongs to the glyceraldehyde-3-phosphate dehydrogenase family. In terms of assembly, homotetramer.

The protein resides in the cytoplasm. The catalysed reaction is D-glyceraldehyde 3-phosphate + phosphate + NAD(+) = (2R)-3-phospho-glyceroyl phosphate + NADH + H(+). It functions in the pathway carbohydrate degradation; glycolysis; pyruvate from D-glyceraldehyde 3-phosphate: step 1/5. The sequence is that of Glyceraldehyde-3-phosphate dehydrogenase (GPD) from Lactarius deterrimus (False saffron milkcap).